Here is a 275-residue protein sequence, read N- to C-terminus: Adaptin ear-binding coat-associated protein 1 (275 aa).

The segment at 166 to 190 (ITTKKGGTSKPKTAGTGGLSLLPPP) is disordered. The span at 167-179 (TTKKGGTSKPKTA) shows a compositional bias: low complexity. Position 211 is a phosphothreonine (T211). Residues 215–275 (IPKSNHGGSD…APQPSNWVQF (61 aa)) form a disordered region. Short sequence motifs (WXXF motif) lie at residues 252–255 (WGDF) and 272–275 (WVQF). A compositionally biased stretch (polar residues) spans 256 to 275 (STASSSVPNQAPQPSNWVQF).

Belongs to the NECAP family. As to quaternary structure, interacts with AP1G1 and AP2A1 components of the adapter protein complexes AP-1 and AP-2. Interacts with the GAE domain proteins GGA1, GGA2 and GGA3.

The protein resides in the cytoplasmic vesicle. The protein localises to the clathrin-coated vesicle membrane. Its subcellular location is the cell membrane. In terms of biological role, involved in endocytosis. This is Adaptin ear-binding coat-associated protein 1 (NECAP1) from Bos taurus (Bovine).